A 467-amino-acid chain; its full sequence is Pancreatic lipase-related protein 3 (467 aa).

A signal peptide spans 1–17 (MLGIWIVAFLFFGTSRG). Residues C21 and C27 are joined by a disulfide bond. A glycan (N-linked (GlcNAc...) asparagine) is linked at N74. C107 and C118 form a disulfide bridge. N125 is a glycosylation site (N-linked (GlcNAc...) asparagine). S168 functions as the Nucleophile in the catalytic mechanism. D191 functions as the Charge relay system in the catalytic mechanism. C252 and C277 are joined by a disulfide. H279 acts as the Charge relay system in catalysis. Cystine bridges form between C301-C312, C315-C320, and C451-C467. Residues 355–467 (WRHKLSVKLS…PNILQNLKPC (113 aa)) enclose the PLAT domain.

The protein belongs to the AB hydrolase superfamily. Lipase family. Overexpressed in hepatocellular carcinoma.

The protein resides in the secreted. The enzyme catalyses a triacylglycerol + H2O = a diacylglycerol + a fatty acid + H(+). The sequence is that of Pancreatic lipase-related protein 3 (PNLIPRP3) from Homo sapiens (Human).